The primary structure comprises 655 residues: p-hydroxybenzoic acid efflux pump subunit AaeB (655 aa).

11 helical membrane-spanning segments follow: residues phenylalanine 13 to leucine 33, tryptophan 38 to proline 58, leucine 69 to isoleucine 89, leucine 93 to valine 113, tryptophan 121 to leucine 141, glutamate 152 to isoleucine 172, leucine 370 to valine 390, phenylalanine 407 to proline 427, glutamine 431 to valine 451, methionine 459 to phenylalanine 479, and phenylalanine 482 to leucine 502.

The protein belongs to the aromatic acid exporter ArAE (TC 2.A.85) family.

Its subcellular location is the cell inner membrane. Forms an efflux pump with AaeA. Could function as a metabolic relief valve, allowing to eliminate certain compounds when they accumulate to high levels in the cell. In Escherichia coli (strain K12 / MC4100 / BW2952), this protein is p-hydroxybenzoic acid efflux pump subunit AaeB.